A 351-amino-acid polypeptide reads, in one-letter code: Nicotinate-nucleotide--dimethylbenzimidazole phosphoribosyltransferase (351 aa).

The active-site Proton acceptor is Glu317.

It belongs to the CobT family.

The enzyme catalyses 5,6-dimethylbenzimidazole + nicotinate beta-D-ribonucleotide = alpha-ribazole 5'-phosphate + nicotinate + H(+). It functions in the pathway nucleoside biosynthesis; alpha-ribazole biosynthesis; alpha-ribazole from 5,6-dimethylbenzimidazole: step 1/2. In terms of biological role, catalyzes the synthesis of alpha-ribazole-5'-phosphate from nicotinate mononucleotide (NAMN) and 5,6-dimethylbenzimidazole (DMB). In Pseudomonas fluorescens (strain ATCC BAA-477 / NRRL B-23932 / Pf-5), this protein is Nicotinate-nucleotide--dimethylbenzimidazole phosphoribosyltransferase.